A 591-amino-acid chain; its full sequence is F420 non-reducing hydrogenase II large subunit (591 aa).

Residue E42 coordinates Mg(2+). Positions 61, 64, 569, and 572 each coordinate Ni(2+). C64 lines the Fe cation pocket. C572 serves as a coordination point for Fe cation. Residue H575 coordinates Mg(2+).

Belongs to the [NiFe]/[NiFeSe] hydrogenase large subunit family. As to quaternary structure, composed of a large subunit (VhtA), a small subunit (VhtG) and a cytochrome subunit (VhtC). Ni(2+) serves as cofactor. It depends on Fe cation as a cofactor.

Its subcellular location is the cell membrane. It carries out the reaction methanophenazine + H2 = dihydromethanophenazine. Part of the F420 non-reducing hydrogenase II complex that catalyzes the reduction of methanophenazine to dihydromethanophenazine. The polypeptide is F420 non-reducing hydrogenase II large subunit (Methanosarcina mazei (strain ATCC BAA-159 / DSM 3647 / Goe1 / Go1 / JCM 11833 / OCM 88) (Methanosarcina frisia)).